The primary structure comprises 731 residues: DNA topoisomerase 1 (731 aa).

Positions 17–130 (KHLVIVESPA…KRIVFNEITP (114 aa)) constitute a Toprim domain. Residues glutamate 23 and aspartate 96 each coordinate Mg(2+). Residues 144 to 569 (DTAKVNAQKA…DFYPAFSEKV (426 aa)) form the Topo IA-type catalytic domain. The interaction with DNA stretch occupies residues 178-183 (SAGRVQ). The O-(5'-phospho-DNA)-tyrosine intermediate role is filled by tyrosine 312. C4-type zinc fingers lie at residues 591-617 (CSQC…FPEC), 628-657 (CPRP…FPVC), and 670-696 (CPQC…NPEC).

It belongs to the type IA topoisomerase family. As to quaternary structure, monomer. Requires Mg(2+) as cofactor.

The catalysed reaction is ATP-independent breakage of single-stranded DNA, followed by passage and rejoining.. In terms of biological role, releases the supercoiling and torsional tension of DNA, which is introduced during the DNA replication and transcription, by transiently cleaving and rejoining one strand of the DNA duplex. Introduces a single-strand break via transesterification at a target site in duplex DNA. The scissile phosphodiester is attacked by the catalytic tyrosine of the enzyme, resulting in the formation of a DNA-(5'-phosphotyrosyl)-enzyme intermediate and the expulsion of a 3'-OH DNA strand. The free DNA strand then undergoes passage around the unbroken strand, thus removing DNA supercoils. Finally, in the religation step, the DNA 3'-OH attacks the covalent intermediate to expel the active-site tyrosine and restore the DNA phosphodiester backbone. The polypeptide is DNA topoisomerase 1 (Treponema pallidum (strain Nichols)).